The sequence spans 268 residues: N-formylmaleamate deformylase (268 aa).

Positions 28–251 (ALILVPGITS…NAGHMIPWDD (224 aa)) constitute an AB hydrolase-1 domain. Catalysis depends on charge relay system residues Ser-101, Glu-221, and His-245.

The catalysed reaction is N-formylmaleamate + H2O = maleamate + formate + H(+). It participates in cofactor degradation; nicotinate degradation. Functionally, deformylase that catalyzes the conversion of N-formylmaleamic acid to maleamate in the aerobic nicotinate degradation pathway. The protein is N-formylmaleamate deformylase (nicD) of Pseudomonas putida (strain ATCC 47054 / DSM 6125 / CFBP 8728 / NCIMB 11950 / KT2440).